The primary structure comprises 229 residues: MFTVGLTGGIGSGKSAVSACLAARGALLIDADQVARDVVAPGTPGLAAVLAEFGTELANADGGLDREALGRIVFADPAARGRLEAIVHPLIREETARRMGEVSPSGIAVHDIPLLVEVHAEGTYDVVLVVEAPRELRLHRLEGRGLPRDQALARMANQATDSQRRAAADIVVDNGGSLDDLDARIEEVWQDLLARRDAKATAKATAKAETVASGTDTAASGTDTAAPAG.

In terms of domain architecture, DPCK spans 3-203; the sequence is TVGLTGGIGS…ARRDAKATAK (201 aa). 11–16 contributes to the ATP binding site; it reads GSGKSA. A disordered region spans residues 203–229; it reads KATAKAETVASGTDTAASGTDTAAPAG.

The protein belongs to the CoaE family.

The protein resides in the cytoplasm. It carries out the reaction 3'-dephospho-CoA + ATP = ADP + CoA + H(+). Its pathway is cofactor biosynthesis; coenzyme A biosynthesis; CoA from (R)-pantothenate: step 5/5. In terms of biological role, catalyzes the phosphorylation of the 3'-hydroxyl group of dephosphocoenzyme A to form coenzyme A. In Frankia casuarinae (strain DSM 45818 / CECT 9043 / HFP020203 / CcI3), this protein is Dephospho-CoA kinase.